The chain runs to 471 residues: Ribulose bisphosphate carboxylase large chain 2 (471 aa).

Positions 116 and 166 each coordinate substrate. Lysine 168 functions as the Proton acceptor in the catalytic mechanism. A substrate-binding site is contributed by lysine 170. Lysine 194, aspartate 196, and glutamate 197 together coordinate Mg(2+). Residue lysine 194 is modified to N6-carboxylysine. The active-site Proton acceptor is histidine 287. 3 residues coordinate substrate: arginine 288, histidine 320, and serine 372.

It belongs to the RuBisCO large chain family. Type I subfamily. In terms of assembly, heterohexadecamer of 8 large chains and 8 small chains; disulfide-linked. The disulfide link is formed within the large subunit homodimers. Requires Mg(2+) as cofactor. Post-translationally, the disulfide bond which can form in the large chain dimeric partners within the hexadecamer appears to be associated with oxidative stress and protein turnover.

The catalysed reaction is 2 (2R)-3-phosphoglycerate + 2 H(+) = D-ribulose 1,5-bisphosphate + CO2 + H2O. It catalyses the reaction D-ribulose 1,5-bisphosphate + O2 = 2-phosphoglycolate + (2R)-3-phosphoglycerate + 2 H(+). Its function is as follows. RuBisCO catalyzes two reactions: the carboxylation of D-ribulose 1,5-bisphosphate, the primary event in carbon dioxide fixation, as well as the oxidative fragmentation of the pentose substrate. Both reactions occur simultaneously and in competition at the same active site. The sequence is that of Ribulose bisphosphate carboxylase large chain 2 from Allochromatium vinosum (strain ATCC 17899 / DSM 180 / NBRC 103801 / NCIMB 10441 / D) (Chromatium vinosum).